Consider the following 115-residue polypeptide: Galanin-like peptide (115 aa).

The signal sequence occupies residues 1–23 (MAPSVPLVLLLVLLLSLAETPAS). Residues 86–115 (NVMEAFAKPEIGDLDVLSKKIPKEEDVLKS) constitute a propeptide that is removed on maturation.

This sequence belongs to the galanin family. In terms of tissue distribution, hypothalamus and pituitary gland.

Its subcellular location is the secreted. Functionally, hypothalamic neuropeptide which binds to the G-protein-coupled galanin receptors (GALR1, GALR2 and GALR3). Involved in a large number of putative physiological functions in CNS homeostatic processes, including the regulation of gonadotropin-releasing hormone secretion. Its function is as follows. Exhibits potent and dose-dependent vasoconstrictor and anti-edema activity in the cutaneous microvasculature, a physiologic effects which does not appear to be mediated via GALR1 or GALR2. Exhibits antimicrobial activity against Gram-negative bacterias, inducing bacterial membrane blebbing. The chain is Galanin-like peptide (GALP) from Macaca nemestrina (Pig-tailed macaque).